Here is a 315-residue protein sequence, read N- to C-terminus: Aspartate carbamoyltransferase catalytic subunit (315 aa).

Carbamoyl phosphate contacts are provided by arginine 64 and threonine 65. Position 92 (lysine 92) interacts with L-aspartate. Carbamoyl phosphate contacts are provided by arginine 114, histidine 142, and glutamine 145. Arginine 175 and arginine 229 together coordinate L-aspartate. Carbamoyl phosphate-binding residues include glycine 270 and proline 271.

Belongs to the aspartate/ornithine carbamoyltransferase superfamily. ATCase family. Heterododecamer (2C3:3R2) of six catalytic PyrB chains organized as two trimers (C3), and six regulatory PyrI chains organized as three dimers (R2).

It carries out the reaction carbamoyl phosphate + L-aspartate = N-carbamoyl-L-aspartate + phosphate + H(+). Its pathway is pyrimidine metabolism; UMP biosynthesis via de novo pathway; (S)-dihydroorotate from bicarbonate: step 2/3. Functionally, catalyzes the condensation of carbamoyl phosphate and aspartate to form carbamoyl aspartate and inorganic phosphate, the committed step in the de novo pyrimidine nucleotide biosynthesis pathway. This chain is Aspartate carbamoyltransferase catalytic subunit, found in Methylorubrum extorquens (strain CM4 / NCIMB 13688) (Methylobacterium extorquens).